The following is a 292-amino-acid chain: Cbb3-type cytochrome c oxidase subunit CcoP (292 aa).

The next 2 membrane-spanning stretches (helical) occupy residues 11–31 and 62–82; these read FGLI…SSLI and VGWI…FFFG. 2 Cytochrome c domains span residues 116–195 and 205–288; these read ELVD…MAEI and QLID…QSLK. Heme c is bound by residues C129, C132, H133, M174, C219, C222, H223, and M264.

Belongs to the CcoP / FixP family. As to quaternary structure, component of the cbb3-type cytochrome c oxidase at least composed of CcoN, CcoO, CcoQ and CcoP. Requires heme c as cofactor.

The protein localises to the cell inner membrane. The protein operates within energy metabolism; oxidative phosphorylation. Functionally, C-type cytochrome. Part of the cbb3-type cytochrome c oxidase complex. CcoP subunit is required for transferring electrons from donor cytochrome c via its heme groups to CcoO subunit. From there, electrons are shuttled to the catalytic binuclear center of CcoN subunit where oxygen reduction takes place. The complex also functions as a proton pump. The sequence is that of Cbb3-type cytochrome c oxidase subunit CcoP from Helicobacter pylori (strain 52).